Consider the following 161-residue polypeptide: Myosin regulatory light chain (161 aa).

Phosphoserine occurs at positions 13 and 14. 3 consecutive EF-hand domains span residues 20–55 (EQVA…FGVF), 56–91 (VMED…RMKQ), and 93–128 (SNEQ…LGDK).

As to quaternary structure, myosin is a hexamer of 2 heavy chains and 4 light chains (two regulatory light chains and two essential light chains).

In Dictyostelium discoideum (Social amoeba), this protein is Myosin regulatory light chain (mlcR).